We begin with the raw amino-acid sequence, 1028 residues long: Contactin-6 (1028 aa).

An N-terminal signal peptide occupies residues Met1 to Gly19. Ig-like C2-type domains lie at Pro32–Gln117, Glu122–Gln208, Pro227–Ala308, Pro318–Arg402, Pro408–Ile495, and Arg499–Ser587. Intrachain disulfides connect Cys50-Cys100, Cys144-Cys196, Cys249-Cys297, Cys339-Cys386, Cys431-Cys479, and Cys521-Cys577. N-linked (GlcNAc...) asparagine glycosylation is found at Asn65 and Asn193. Residues Asn368, Asn377, and Asn468 are each glycosylated (N-linked (GlcNAc...) asparagine). 4 consecutive Fibronectin type-III domains span residues Pro600–Ser698, Ala703–Asp800, Ala805–Ser901, and Pro902–Ser996. Residues Asn659, Asn765, Asn860, and Asn865 are each glycosylated (N-linked (GlcNAc...) asparagine). The residue at position 882 (Tyr882) is a Phosphotyrosine. Residues Thr887–Pro902 are compositionally biased toward polar residues. Positions Thr887–Ala908 are disordered. Asn895, Asn931, Asn956, and Asn957 each carry an N-linked (GlcNAc...) asparagine glycan. Ser999 carries the GPI-anchor amidated serine lipid modification. A propeptide spans Val1000–Arg1028 (removed in mature form).

Belongs to the immunoglobulin superfamily. Contactin family. In terms of assembly, interacts with PTPRG. As to expression, specifically expressed in neuronal cells. In brain, it is expressed in spinal cord, cerebrum and cerebellum. At 17 dpc, it is expressed in hippocampus, cerebellum, and the brain stem. Strongly expressed after birth with a maximum level between P1 and P21, which corresponds to the time frame of oligodendrogliogenesis.

The protein resides in the cell membrane. Its function is as follows. Contactins mediate cell surface interactions during nervous system development. Participates in oligodendrocytes generation by acting as a ligand of NOTCH1. Its association with NOTCH1 promotes NOTCH1 activation through the released notch intracellular domain (NICD) and subsequent translocation to the nucleus. May be involved in motor coordination. In Rattus norvegicus (Rat), this protein is Contactin-6 (Cntn6).